Here is a 279-residue protein sequence, read N- to C-terminus: Large ribosomal subunit protein uL2 (279 aa).

Disordered regions lie at residues 34–58 (LRPLHKTGGRNNTGRITTRHKGGGH) and 225–279 (VMNP…KNKR). The span at 251–268 (GKPEGRTRRPNKESDKLI) shows a compositional bias: basic and acidic residues. Residues 269 to 279 (VRRRRTGKNKR) show a composition bias toward basic residues.

The protein belongs to the universal ribosomal protein uL2 family. As to quaternary structure, part of the 50S ribosomal subunit. Forms a bridge to the 30S subunit in the 70S ribosome.

Functionally, one of the primary rRNA binding proteins. Required for association of the 30S and 50S subunits to form the 70S ribosome, for tRNA binding and peptide bond formation. It has been suggested to have peptidyltransferase activity; this is somewhat controversial. Makes several contacts with the 16S rRNA in the 70S ribosome. This Micrococcus luteus (strain ATCC 4698 / DSM 20030 / JCM 1464 / CCM 169 / CCUG 5858 / IAM 1056 / NBRC 3333 / NCIMB 9278 / NCTC 2665 / VKM Ac-2230) (Micrococcus lysodeikticus) protein is Large ribosomal subunit protein uL2.